A 20-amino-acid polypeptide reads, in one-letter code: Protein PR-L5 (20 aa).

It belongs to the BetVI family.

The protein is Protein PR-L5 of Lupinus luteus (European yellow lupine).